The primary structure comprises 442 residues: Probable serine/threonine-protein kinase PBL17 (442 aa).

A lipid anchor (N-myristoyl glycine) is attached at G2. A lipid anchor (S-palmitoyl cysteine) is attached at C4. Position 79 is a phosphothreonine (T79). One can recognise a Protein kinase domain in the interval 90-370 (FRPDYILGEG…NHVVEVLETL (281 aa)). Residues 96-104 (LGEGGFGVV) and K125 each bind ATP. Y170 bears the Phosphotyrosine mark. D220 serves as the catalytic Proton acceptor. S254 carries the phosphoserine modification. A phosphothreonine mark is found at T255 and T260. Y268 carries the phosphotyrosine modification. Residues 385–442 (HSRGKSVTLYEASSDSQGTRDGNGQRRRRPESGRSKSEAAVDTEKYVSTLSEPDTTKI) form a disordered region. Over residues 395-406 (EASSDSQGTRDG) the composition is skewed to polar residues. Positions 414–429 (PESGRSKSEAAVDTEK) are enriched in basic and acidic residues. Residues 430–442 (YVSTLSEPDTTKI) show a composition bias toward polar residues.

It belongs to the protein kinase superfamily. Ser/Thr protein kinase family.

The protein localises to the cell membrane. The enzyme catalyses L-seryl-[protein] + ATP = O-phospho-L-seryl-[protein] + ADP + H(+). The catalysed reaction is L-threonyl-[protein] + ATP = O-phospho-L-threonyl-[protein] + ADP + H(+). In terms of biological role, may be involved in plant defense signaling. The sequence is that of Probable serine/threonine-protein kinase PBL17 from Arabidopsis thaliana (Mouse-ear cress).